The primary structure comprises 831 residues: Periplasmic nitrate reductase (831 aa).

A signal peptide (tat-type signal) is located at residues 1 to 31 (MTISRRDLLKAQAAGIAAMAANIPLSSQAPA). The region spanning 41-97 (ITWSKAPCRFCGTGCGVMVGVKEGRVVATHGDLLAEVNRGLNCVKGYFLSKIMYGAD) is the 4Fe-4S Mo/W bis-MGD-type domain. [4Fe-4S] cluster contacts are provided by Cys-48, Cys-51, Cys-55, and Cys-83. Mo-bis(molybdopterin guanine dinucleotide) contacts are provided by residues Lys-85, Gln-152, Asn-177, Cys-181, 214–221 (WGSNMAEM), 245–249 (STFTH), 264–266 (GTD), Met-375, Gln-379, Asn-485, 511–512 (SD), Lys-534, Asp-561, and 721–730 (TGRVLEHWHS). Residue Trp-797 participates in substrate binding. 2 residues coordinate Mo-bis(molybdopterin guanine dinucleotide): Asn-805 and Lys-822.

It belongs to the prokaryotic molybdopterin-containing oxidoreductase family. NasA/NapA/NarB subfamily. In terms of assembly, component of the periplasmic nitrate reductase NapAB complex composed of NapA and NapB. It depends on [4Fe-4S] cluster as a cofactor. Mo-bis(molybdopterin guanine dinucleotide) serves as cofactor. In terms of processing, predicted to be exported by the Tat system. The position of the signal peptide cleavage has not been experimentally proven.

It localises to the periplasm. It carries out the reaction 2 Fe(II)-[cytochrome] + nitrate + 2 H(+) = 2 Fe(III)-[cytochrome] + nitrite + H2O. In terms of biological role, catalytic subunit of the periplasmic nitrate reductase complex NapAB. Receives electrons from NapB and catalyzes the reduction of nitrate to nitrite. The sequence is that of Periplasmic nitrate reductase from Paracoccus pantotrophus (Thiosphaera pantotropha).